The sequence spans 263 residues: Metaxin-2 (263 aa).

Ser2 is subject to N-acetylserine.

This sequence belongs to the metaxin family. Interacts with MTX1/metaxin-1. Associates with the mitochondrial contact site and cristae organizing system (MICOS) complex, composed of at least MICOS10/MIC10, CHCHD3/MIC19, CHCHD6/MIC25, APOOL/MIC27, IMMT/MIC60, APOO/MIC23/MIC26 and QIL1/MIC13. This complex was also known under the names MINOS or MitOS complex. The MICOS complex associates with mitochondrial outer membrane proteins SAMM50, MTX1 and MTX2 (together described as components of the mitochondrial outer membrane sorting assembly machinery (SAM) complex) and DNAJC11, mitochondrial inner membrane protein TMEM11 and with HSPA9. The MICOS and SAM complexes together with DNAJC11 are part of a large protein complex spanning both membranes termed the mitochondrial intermembrane space bridging (MIB) complex.

It is found in the mitochondrion outer membrane. The protein localises to the mitochondrion. Functionally, involved in transport of proteins into the mitochondrion. This Mus musculus (Mouse) protein is Metaxin-2 (Mtx2).